Reading from the N-terminus, the 170-residue chain is ATP synthase subunit b (170 aa).

The helical transmembrane segment at 15 to 37 threads the bilayer; sequence LNLFETNVLNWAVVVFGLYKFLP.

It belongs to the ATPase B chain family. As to quaternary structure, F-type ATPases have 2 components, F(1) - the catalytic core - and F(0) - the membrane proton channel. F(1) has five subunits: alpha(3), beta(3), gamma(1), delta(1), epsilon(1). F(0) has four main subunits: a(1), b(1), b'(1) and c(10-14). The alpha and beta chains form an alternating ring which encloses part of the gamma chain. F(1) is attached to F(0) by a central stalk formed by the gamma and epsilon chains, while a peripheral stalk is formed by the delta, b and b' chains.

It is found in the cellular thylakoid membrane. Its function is as follows. F(1)F(0) ATP synthase produces ATP from ADP in the presence of a proton or sodium gradient. F-type ATPases consist of two structural domains, F(1) containing the extramembraneous catalytic core and F(0) containing the membrane proton channel, linked together by a central stalk and a peripheral stalk. During catalysis, ATP synthesis in the catalytic domain of F(1) is coupled via a rotary mechanism of the central stalk subunits to proton translocation. Functionally, component of the F(0) channel, it forms part of the peripheral stalk, linking F(1) to F(0). The polypeptide is ATP synthase subunit b (Prochlorococcus marinus (strain MIT 9515)).